A 455-amino-acid chain; its full sequence is La-related protein 6C (455 aa).

Residues 1 to 20 (MAQMQREEVESVTTEKKRLD) are compositionally biased toward basic and acidic residues. A disordered region spans residues 1 to 29 (MAQMQREEVESVTTEKKRLDGGGGSSGAQ). An HTH La-type RNA-binding domain is found at 138-229 (NLLSDDLRLK…KRTSQFTDRD (92 aa)). The 89-residue stretch at 236–324 (RTVVAENLPD…KGLRVRLLLR (89 aa)) folds into the RRM domain. Disordered stretches follow at residues 348 to 396 (SYES…YAVG) and 414 to 455 (SLGS…PNNL).

The protein resides in the nucleus. Transcriptional regulator. This chain is La-related protein 6C (LARP6C), found in Arabidopsis thaliana (Mouse-ear cress).